The chain runs to 461 residues: Nuclear distribution protein PAC1 (461 aa).

In terms of domain architecture, LisH spans 9 to 41; it reads QAEELHKSIIAYLTANNLLDTANTLRAELNLNE. A coiled-coil region spans residues 61–88; sequence TSVVRLQKKIMDLESRMSAMQAELDNAT. WD repeat units lie at residues 114-155, 157-197, 201-248, 251-290, 312-355, 357-396, 401-446, and 448-461; these read SHRD…RTIK, HTRA…KNIR, GHDH…CLRT, GHTA…PETK, QYLS…LLTL, GHDN…KCIK, AHER…IRCV, and ATGG…IFAN.

It belongs to the WD repeat LIS1/nudF family. As to quaternary structure, self-associates. Interacts with NDL1 and dynein.

Its subcellular location is the cytoplasm. The protein localises to the cytoskeleton. It is found in the spindle pole. Functionally, positively regulates the activity of the minus-end directed microtubule motor protein dynein. May enhance dynein-mediated microtubule sliding by targeting dynein to the microtubule plus end. Required for nuclear migration during vegetative growth as well as development. Required for retrograde early endosome (EE) transport from the hyphal tip. Required for localization of dynein to the mitotic spindle poles. Recruits additional proteins to the dynein complex at SPBs. This chain is Nuclear distribution protein PAC1, found in Arthroderma benhamiae (strain ATCC MYA-4681 / CBS 112371) (Trichophyton mentagrophytes).